Here is a 439-residue protein sequence, read N- to C-terminus: GTPase Der (439 aa).

2 EngA-type G domains span residues A4 to E169 and I177 to N352. Residues G10 to S17, D57 to L61, N120 to D123, G183 to S190, D230 to I234, and N295 to D298 each bind GTP. The region spanning K353–G437 is the KH-like domain.

It belongs to the TRAFAC class TrmE-Era-EngA-EngB-Septin-like GTPase superfamily. EngA (Der) GTPase family. Associates with the 50S ribosomal subunit.

GTPase that plays an essential role in the late steps of ribosome biogenesis. This chain is GTPase Der, found in Thermoanaerobacter pseudethanolicus (strain ATCC 33223 / 39E) (Clostridium thermohydrosulfuricum).